A 436-amino-acid polypeptide reads, in one-letter code: Glutamyl-tRNA reductase (436 aa).

Substrate-binding positions include 50–53, serine 110, 115–117, and glutamine 121; these read TCNR and ETQ. The active-site Nucleophile is cysteine 51. Residue 190–195 coordinates NADP(+); it reads GLGEMS.

It belongs to the glutamyl-tRNA reductase family. Homodimer.

The enzyme catalyses (S)-4-amino-5-oxopentanoate + tRNA(Glu) + NADP(+) = L-glutamyl-tRNA(Glu) + NADPH + H(+). Its pathway is porphyrin-containing compound metabolism; protoporphyrin-IX biosynthesis; 5-aminolevulinate from L-glutamyl-tRNA(Glu): step 1/2. In terms of biological role, catalyzes the NADPH-dependent reduction of glutamyl-tRNA(Glu) to glutamate 1-semialdehyde (GSA). In Wolinella succinogenes (strain ATCC 29543 / DSM 1740 / CCUG 13145 / JCM 31913 / LMG 7466 / NCTC 11488 / FDC 602W) (Vibrio succinogenes), this protein is Glutamyl-tRNA reductase.